The sequence spans 131 residues: Ribosomally synthesized cyclic peptide phomopsin precursor gigA (131 aa).

An N-terminal signal peptide occupies residues 1 to 18 (MQFTLIFFYATLAAFGLA). Propeptides lie at residues 19 to 38 (APSE…LDKR), 48 to 65 (ADLV…LDKR), 75 to 92 (ADMV…LDKR), 102 to 119 (ADMV…LAKR), and 129 to 131 (ADM).

In terms of processing, gigA is processed by several endopeptidases including kexin proteases to produce 2 identical copies of the nonaxapeptide Ile-Asn-Phe-Lys-Ile-Pro-Tyr-Thr-Gly, one copy of the nonaketide Ile-Gly-Phe-Lys-Leu-Pro-Tyr-Arg-Gly and one copy of the nonaketide Pro-Asn-Phe-Lys-Met-Pro-Tyr-Arg-Gly, that are further modified into phomapsins B, C and A, respectively. After being excised from the precursor peptide, the core peptides are cyclized and modified post-translationally by enzymes encoded within the gene cluster. Epichloecyclin biosynthesis requires only dimethylation of the side-chain amino group of the conserved lysine for completion.

It functions in the pathway mycotoxin biosynthesis. In terms of biological role, ribosomally synthesized cyclic peptide phomopsin precursor; part of the gene cluster that mediates the biosynthesis of the epichloecyclins, a group of nonapeptides, with a likely cyclic structure and dimethylation of the conserved lysine. The gigA translated product contains 4 repeated peptide embedding the nonapeptide Ile-Asn-Phe-Lys-Ile-Pro-Tyr-Thr-Gly in repeats 1 and 2, Ile-Gly-Phe-Lys-Leu-Pro-Tyr-Arg-Gly in repeat 3, and Pro-Asn-Phe-Lys-Met-Pro-Tyr-Arg-Gly in repeat 4 that are converted into epichloecyclins B, C and A, respectively. Moreover, removal of the last Gly residue in epichloecyclins B and C leads to epichloecyclins D and E, respectively. The polypeptide is Ribosomally synthesized cyclic peptide phomopsin precursor gigA (nc25) (Epichloe festucae (strain Fl1)).